The following is a 305-amino-acid chain: Achromobactin-binding periplasmic protein (305 aa).

The signal sequence occupies residues 1–29; the sequence is MNEYLVSRRRLLRLSLSLLPLGLGRPALA. The Fe/B12 periplasmic-binding domain maps to 37–302; sequence RVITLFQGAT…DIARVTGIAG (266 aa).

Belongs to the bacterial solute-binding protein 8 family.

The protein localises to the periplasm. Its function is as follows. Binds citrate- or chloride-dependent Fe(3+); part of the binding-protein-dependent transport system CbrABCD for uptake of the siderophore achromobactin. This is Achromobactin-binding periplasmic protein (cbrA) from Dickeya dadantii (strain 3937) (Erwinia chrysanthemi (strain 3937)).